The following is a 434-amino-acid chain: Eukaryotic peptide chain release factor subunit 1-1 (434 aa).

It belongs to the eukaryotic release factor 1 family. Heterodimer of two subunits, one of which binds GTP.

The protein resides in the cytoplasm. Directs the termination of nascent peptide synthesis (translation) in response to the termination codons UAA, UAG and UGA. Modulates plant growth and development. In Brassica oleracea var. botrytis (Cauliflower), this protein is Eukaryotic peptide chain release factor subunit 1-1.